The chain runs to 228 residues: Transcription factor zip-11 (228 aa).

The basic motif stretch occupies residues 166–202 (RKRQQNKVAAARYRDKQKAKWQDLLDQLEAEEDRNQR). The bZIP domain maps to 166–224 (RKRQQNKVAAARYRDKQKAKWQDLLDQLEAEEDRNQRLKLQAGHLEKEVAEMRQAFLAK). The leucine-zipper stretch occupies residues 203–210 (LKLQAGHL).

It belongs to the bZIP family. As to quaternary structure, interacts with CCAAT/enhancer-binding protein cebp-2.

It localises to the nucleus. Transcription factor. Involved in modulating innate immune response pathways, acting to promote resistance against infection by Gram-negative bacterium P.aeruginosa strain PA14. May act as part of a feedback regulatory loop with the pmk-1/p38 MAPK pathway. May also function in concert with CCAAT/enhancer-binding protein cebp-2 to mediate immune responses, independently of the pmk-1/p38 MAPK pathway. This chain is Transcription factor zip-11, found in Caenorhabditis elegans.